The following is a 488-amino-acid chain: 3-octaprenyl-4-hydroxybenzoate carboxy-lyase (488 aa).

N172 contributes to the Mn(2+) binding site. Prenylated FMN is bound by residues 175-177, 189-191, and 194-195; these read IYR, RWL, and RG. E238 serves as a coordination point for Mn(2+). Residue D287 is the Proton donor of the active site.

It belongs to the UbiD family. Homohexamer. Requires prenylated FMN as cofactor. Mn(2+) serves as cofactor.

It is found in the cell membrane. The catalysed reaction is a 4-hydroxy-3-(all-trans-polyprenyl)benzoate + H(+) = a 2-(all-trans-polyprenyl)phenol + CO2. It functions in the pathway cofactor biosynthesis; ubiquinone biosynthesis. In terms of biological role, catalyzes the decarboxylation of 3-octaprenyl-4-hydroxy benzoate to 2-octaprenylphenol, an intermediate step in ubiquinone biosynthesis. The protein is 3-octaprenyl-4-hydroxybenzoate carboxy-lyase of Halorhodospira halophila (strain DSM 244 / SL1) (Ectothiorhodospira halophila (strain DSM 244 / SL1)).